We begin with the raw amino-acid sequence, 244 residues long: MNGISNALNGLYDISGVEVGQHFYWQIAGFQVHAQVLITSWVVIAILLGSAVIAVRNPQTIPTAGQNFFEYVLEFIRDVSKTQIGEEYGPWVPFIGTMFLFIFVSNWSGALLPWKIIQLPHGELAAPTNDINTTVALALLTSVAYFYAGLSKKGLGYFSKYIQPTPILLPINILEDFTKPLSLSFRLFGNILADELVVVVLVSLVPSVVPIPVMFLGLFTSGIQALIFATLAAAYIGESMEGHH.

Helical transmembrane passes span glutamine 35–valine 55, valine 92–leucine 112, isoleucine 131–serine 151, leucine 196–leucine 216, and glycine 217–glycine 237.

This sequence belongs to the ATPase A chain family. As to quaternary structure, F-type ATPases have 2 components, CF(1) - the catalytic core - and CF(0) - the membrane proton channel. CF(1) has five subunits: alpha(3), beta(3), gamma(1), delta(1), epsilon(1). CF(0) has four main subunits: a, b, b' and c.

It is found in the plastid. Its subcellular location is the chloroplast thylakoid membrane. Key component of the proton channel; it plays a direct role in the translocation of protons across the membrane. This Gossypium hirsutum (Upland cotton) protein is ATP synthase subunit a, chloroplastic.